The chain runs to 465 residues: Lipase 10 (465 aa).

A signal peptide spans Met-1–Ala-16. Cys-112 and Cys-285 form a disulfide bridge. The active-site Charge relay system is the Ser-196. 2 N-linked (GlcNAc...) asparagine glycosylation sites follow: Asn-231 and Asn-319. Active-site charge relay system residues include Asp-348 and His-381. A disulfide bond links Cys-364 and Cys-409.

This sequence belongs to the AB hydrolase superfamily. Lipase family. Class Lip subfamily.

The protein localises to the secreted. It carries out the reaction a triacylglycerol + H2O = a diacylglycerol + a fatty acid + H(+). Functionally, secreted lipase that is able to hydrolyze both the neutral triacylglycerols and the monopalmitate ester Tween 40, allowing the use of hydrolyzed products as carbon sources. Has broad lipolytic activity, which may be important for colonization and subsequent infection, therefore contributing to the persistence and virulence in human tissue. This Candida albicans (strain SC5314 / ATCC MYA-2876) (Yeast) protein is Lipase 10.